The sequence spans 329 residues: L-lactate dehydrogenase (329 aa).

NAD(+) is bound by residues Val18, Glu39, Lys46, Tyr71, and 85–86 (GA). Substrate-binding residues include Gln88 and Arg94. NAD(+) is bound by residues Ser107, 124-126 (AAN), and Ser149. Substrate is bound at residue 126–129 (NPVD). 154–157 (DSAR) is a substrate binding site. 2 residues coordinate beta-D-fructose 1,6-bisphosphate: Arg159 and His174. His181 (proton acceptor) is an active-site residue. The residue at position 226 (Tyr226) is a Phosphotyrosine. Thr235 contributes to the substrate binding site.

The protein belongs to the LDH/MDH superfamily. LDH family. In terms of assembly, homotetramer.

It localises to the cytoplasm. The enzyme catalyses (S)-lactate + NAD(+) = pyruvate + NADH + H(+). Its pathway is fermentation; pyruvate fermentation to lactate; (S)-lactate from pyruvate: step 1/1. Allosterically activated by fructose 1,6-bisphosphate (FBP). Functionally, catalyzes the conversion of lactate to pyruvate. This is L-lactate dehydrogenase from Streptococcus equinus (Streptococcus bovis).